The primary structure comprises 192 residues: Xanthine phosphoribosyltransferase (192 aa).

Residues L20 and N27 each coordinate xanthine. A128–A132 is a binding site for 5-phospho-alpha-D-ribose 1-diphosphate. A xanthine-binding site is contributed by K156.

It belongs to the purine/pyrimidine phosphoribosyltransferase family. Xpt subfamily. As to quaternary structure, homodimer.

Its subcellular location is the cytoplasm. The enzyme catalyses XMP + diphosphate = xanthine + 5-phospho-alpha-D-ribose 1-diphosphate. The protein operates within purine metabolism; XMP biosynthesis via salvage pathway; XMP from xanthine: step 1/1. Its function is as follows. Converts the preformed base xanthine, a product of nucleic acid breakdown, to xanthosine 5'-monophosphate (XMP), so it can be reused for RNA or DNA synthesis. The polypeptide is Xanthine phosphoribosyltransferase (Ligilactobacillus salivarius (strain UCC118) (Lactobacillus salivarius)).